A 958-amino-acid polypeptide reads, in one-letter code: Probable transport protein MmpL1 (958 aa).

12 helical membrane-spanning segments follow: residues 19–39, 192–212, 216–236, 252–272, 295–315, 329–349, 377–397, 762–782, 791–811, 814–834, 868–888, and 906–927; these read ALSL…NVVA, SLHT…FIAY, SAAL…RGII, VNVL…FLVG, TAHV…CLGF, AIGL…IIAV, WPGP…LALP, YDVM…MLGI, VIVG…VLIW, ILHM…MLAV, VVTI…ASDL, and TLVV…WFWW.

It belongs to the resistance-nodulation-cell division (RND) (TC 2.A.6) family. MmpL subfamily.

It localises to the cell membrane. The protein is Probable transport protein MmpL1 (mmpL1) of Mycobacterium tuberculosis (strain CDC 1551 / Oshkosh).